The following is a 202-amino-acid chain: MVNYPHNLIRQKVSSVQKQTKQNKVDFANRGMSFEAAINATNDYYLSRQIAVIHKKPTPVQIVKVDYPKRSRAKIVEAYFRQASTTDYCGVYKGHYVDFEAKETRQKTAMPMKNFHLHQIEHMTCVLHQKGICFVLLHFSTLKETYYLPAQALISFYQIDNGSKSMPIDYIRKNGFKVAFGAFPQVPYLNIIEQNFLGGDYN.

Positions 85, 87, 100, and 119 each coordinate Mg(2+).

The protein belongs to the RecU family. It depends on Mg(2+) as a cofactor.

Its subcellular location is the cytoplasm. It catalyses the reaction Endonucleolytic cleavage at a junction such as a reciprocal single-stranded crossover between two homologous DNA duplexes (Holliday junction).. In terms of biological role, endonuclease that resolves Holliday junction intermediates in genetic recombination. Cleaves mobile four-strand junctions by introducing symmetrical nicks in paired strands. Promotes annealing of linear ssDNA with homologous dsDNA. Required for DNA repair, homologous recombination and chromosome segregation. The sequence is that of Holliday junction resolvase RecU from Streptococcus pyogenes serotype M5 (strain Manfredo).